Consider the following 405-residue polypeptide: Accessory Sec system protein translocase subunit SecY2 (405 aa).

A run of 10 helical transmembrane segments spans residues 14-34, 65-85, 104-124, 131-151, 156-176, 191-211, 247-267, 285-305, 343-363, and 368-388; these read LFTSFLLFIYVLGSRIILPFV, IFSVGLSPWMSAMILWQMFSF, MYLTLLIAVIQSLAVSLRLPV, ILVVLMNTILLIAGTFFLVWL, ASMGIGGSIVILLSSMVLNIP, GIIVLLALLTLVFSYLLALMY, MYVMSFLSVPAYLFILLGFIF, PLWVYVYISVLFLFSIIFAFV, FSVIGGLFNVIMAGGPMLFVL, and LLRLAMIPGLFMMFGGMIFTI.

The protein belongs to the SecY/SEC61-alpha family. SecY2 subfamily. In terms of assembly, component of the accessory SecA2/SecY2 protein translocase complex required to export cell wall proteins. May form heterotrimers with SecE and SecG subunits.

The protein resides in the cell membrane. Its function is as follows. Part of the accessory SecA2/SecY2 system specifically required for export of possible cell wall proteins. The central subunit of a protein translocation channel. The protein is Accessory Sec system protein translocase subunit SecY2 of Streptococcus pneumoniae serotype 4 (strain ATCC BAA-334 / TIGR4).